The following is a 248-amino-acid chain: Metallo-beta-lactamase type 2 (248 aa).

Positions 1–21 (MKGLKGLLVLALGFTGLQVFG) are cleaved as a signal peptide. Residues histidine 97, histidine 99, aspartate 101, histidine 160, and cysteine 179 each contribute to the Zn(2+) site. Lysine 182 provides a ligand contact to substrate. Histidine 221 is a binding site for Zn(2+).

Belongs to the metallo-beta-lactamase superfamily. Class-B beta-lactamase family. As to quaternary structure, monomer. Zn(2+) is required as a cofactor.

The protein resides in the periplasm. It carries out the reaction a beta-lactam + H2O = a substituted beta-amino acid. Confers resistance to the different beta-lactams antibiotics (penicillin, cephalosporin and carbapenem) via the hydrolysis of the beta-lactam ring. This is Metallo-beta-lactamase type 2 (blaB8) from Elizabethkingia meningoseptica (Chryseobacterium meningosepticum).